The primary structure comprises 128 residues: Keratin-associated protein 2-3 (128 aa).

Positions 5-112 (CCGSTLSSLS…SVQSPCCRPP (108 aa)) are 10 X 5 AA repeats of C-C-[CDPQRWG]-[APRS]-[CIPSTVD].

It belongs to the KRTAP type 2 family. In terms of assembly, interacts with hair keratins.

In terms of biological role, in the hair cortex, hair keratin intermediate filaments are embedded in an interfilamentous matrix, consisting of hair keratin-associated proteins (KRTAP), which are essential for the formation of a rigid and resistant hair shaft through their extensive disulfide bond cross-linking with abundant cysteine residues of hair keratins. The matrix proteins include the high-sulfur and high-glycine-tyrosine keratins. This Homo sapiens (Human) protein is Keratin-associated protein 2-3 (KRTAP2-3).